The primary structure comprises 425 residues: Serine/threonine transporter SstT (425 aa).

9 consecutive transmembrane segments (helical) span residues 11 to 31 (FLNGSLVLQIVIGIVAGLILA), 43 to 63 (FLGSLFVSALKAVAPILVFVL), 91 to 111 (LFAASTAVMVSYFFPTTLVLV), 141 to 161 (ALVSGNFIGILAWAAGLGFAL), 182 to 202 (IVHLVIRFAPLGIFGLVAGTI), 216 to 236 (LLAVLLGCMILIALVINPIIV), 290 to 310 (IPLGATINMAGASITITVLTL), 316 to 336 (LGIEFDIATAILLSVVAAVSA), and 363 to 383 (VAMQVVAIGFIIGVVQDSAET).

It belongs to the dicarboxylate/amino acid:cation symporter (DAACS) (TC 2.A.23) family.

The protein resides in the cell inner membrane. The enzyme catalyses L-serine(in) + Na(+)(in) = L-serine(out) + Na(+)(out). The catalysed reaction is L-threonine(in) + Na(+)(in) = L-threonine(out) + Na(+)(out). Functionally, involved in the import of serine and threonine into the cell, with the concomitant import of sodium (symport system). The sequence is that of Serine/threonine transporter SstT from Psychromonas ingrahamii (strain DSM 17664 / CCUG 51855 / 37).